The sequence spans 31 residues: Branched-chain-amino-acid aminotransferase, mitochondrial (31 aa).

A mitochondrion-targeting transit peptide spans 1-27 (MAAAALRQIWARKFLPVPWLLCGPRRY).

It belongs to the class-IV pyridoxal-phosphate-dependent aminotransferase family. In terms of assembly, homodimer. Requires pyridoxal 5'-phosphate as cofactor.

It is found in the mitochondrion. The enzyme catalyses L-leucine + 2-oxoglutarate = 4-methyl-2-oxopentanoate + L-glutamate. It carries out the reaction L-isoleucine + 2-oxoglutarate = (S)-3-methyl-2-oxopentanoate + L-glutamate. It catalyses the reaction L-valine + 2-oxoglutarate = 3-methyl-2-oxobutanoate + L-glutamate. Functionally, catalyzes the first reaction in the catabolism of the essential branched chain amino acids leucine, isoleucine, and valine. May also function as a transporter of branched chain alpha-keto acids. In Sus scrofa (Pig), this protein is Branched-chain-amino-acid aminotransferase, mitochondrial (BCAT2).